Reading from the N-terminus, the 344-residue chain is Phenylalanine--tRNA ligase alpha subunit (344 aa).

Glutamate 269 contacts Mg(2+).

The protein belongs to the class-II aminoacyl-tRNA synthetase family. Phe-tRNA synthetase alpha subunit type 1 subfamily. Tetramer of two alpha and two beta subunits. Mg(2+) is required as a cofactor.

Its subcellular location is the cytoplasm. It carries out the reaction tRNA(Phe) + L-phenylalanine + ATP = L-phenylalanyl-tRNA(Phe) + AMP + diphosphate + H(+). This Ralstonia pickettii (strain 12J) protein is Phenylalanine--tRNA ligase alpha subunit.